We begin with the raw amino-acid sequence, 618 residues long: 1-deoxy-D-xylulose-5-phosphate synthase (618 aa).

Residues histidine 74 and 115–117 each bind thiamine diphosphate; that span reads GHS. Aspartate 146 is a binding site for Mg(2+). Residues 147–148, asparagine 175, tyrosine 286, and glutamate 366 each bind thiamine diphosphate; that span reads GA. Residue asparagine 175 participates in Mg(2+) binding.

It belongs to the transketolase family. DXPS subfamily. As to quaternary structure, homodimer. It depends on Mg(2+) as a cofactor. Requires thiamine diphosphate as cofactor.

It catalyses the reaction D-glyceraldehyde 3-phosphate + pyruvate + H(+) = 1-deoxy-D-xylulose 5-phosphate + CO2. It participates in metabolic intermediate biosynthesis; 1-deoxy-D-xylulose 5-phosphate biosynthesis; 1-deoxy-D-xylulose 5-phosphate from D-glyceraldehyde 3-phosphate and pyruvate: step 1/1. Functionally, catalyzes the acyloin condensation reaction between C atoms 2 and 3 of pyruvate and glyceraldehyde 3-phosphate to yield 1-deoxy-D-xylulose-5-phosphate (DXP). In Clostridium tetani (strain Massachusetts / E88), this protein is 1-deoxy-D-xylulose-5-phosphate synthase.